Here is a 537-residue protein sequence, read N- to C-terminus: Periplasmic murein peptide-binding protein MppA (537 aa).

A signal peptide spans 1-22; it reads MKHSVSVTCCALLVSSISLSYA. L-alanyl-gamma-D-glutamyl-meso-2,6-diaminopimelate is bound by residues K42, V54, L56, Q289, R424, S435, V437, D439, and T506.

It belongs to the bacterial solute-binding protein 5 family. As to quaternary structure, the complex is composed of two ATP-binding proteins (OppD and OppF), two transmembrane proteins (OppB and OppC) and a solute-binding protein (MppA).

It localises to the periplasm. Its function is as follows. Part of the ABC transporter complex MppA-OppBCDF involved in the uptake of the cell wall murein tripeptide L-alanyl-gamma-D-glutamyl-meso-diaminopimelate. Is involved in the recycling of cell wall peptides. Binds the cell wall peptide L-Ala-D-Gly-gamma-meso-diaminopimelic acid. Can also transport ordinary alpha-linked tripeptides such as Pro-Phe-Lys, but with much lower efficiency than OppA. Cannot bind typical tripeptides such as Lys-Glu-Lys, Lys-Lys-Lys or Ala-Ala-Ala. The protein is Periplasmic murein peptide-binding protein MppA of Escherichia coli (strain K12).